A 567-amino-acid chain; its full sequence is Chitinase 3 (567 aa).

Positions 1–16 (MLYLLTIFSLLLPALA) are cleaved as a signal peptide. One can recognise a GH18 domain in the interval 23–313 (SNVAVYWGQN…ENMKAIVKKA (291 aa)). The active-site Proton donor is Glu-157. Residue Asn-159 is glycosylated (N-linked (GlcNAc...) asparagine). Residues 313–471 (ASPGEETTSS…TSALSSSTTT (159 aa)) form a disordered region. Composition is skewed to low complexity over residues 319 to 436 (TTSS…SLSS) and 444 to 471 (STTTGISKSSSTKPATSTTSALSSSTTT).

It belongs to the glycosyl hydrolase 18 family. Chitinase class III subfamily.

It localises to the secreted. It carries out the reaction Random endo-hydrolysis of N-acetyl-beta-D-glucosaminide (1-&gt;4)-beta-linkages in chitin and chitodextrins.. In terms of biological role, chitinase involved in the remodeling of chitin in the fungal cell wall. Plays a role in cell separation. The sequence is that of Chitinase 3 (CHT3) from Candida albicans (strain SC5314 / ATCC MYA-2876) (Yeast).